A 397-amino-acid polypeptide reads, in one-letter code: Major outer membrane porin, serovar H (397 aa).

The signal sequence occupies residues 1 to 22; the sequence is MKKLLKSVLVFAALSSASSLQA.

Belongs to the chlamydial porin (CP) (TC 1.B.2) family. As to quaternary structure, part of a disulfide cross-linked outer membrane complex (COMC) composed of the major outer membrane porin (MOMP), the small cysteine-rich protein (OmcA) and the large cysteine-rich periplasmic protein (OmcB).

The protein localises to the cell outer membrane. Functionally, in elementary bodies (EBs, the infectious stage, which is able to survive outside the host cell) provides the structural integrity of the outer envelope through disulfide cross-links with the small cysteine-rich protein and the large cysteine-rich periplasmic protein. It has been described in publications as the Sarkosyl-insoluble COMC (Chlamydia outer membrane complex), and serves as the functional equivalent of peptidoglycan. Its function is as follows. Permits diffusion of specific solutes through the outer membrane. In Chlamydia trachomatis, this protein is Major outer membrane porin, serovar H (ompA).